Consider the following 229-residue polypeptide: Cytidylate kinase (229 aa).

7 to 15 is an ATP binding site; that stretch reads GPAGAGKSS.

It belongs to the cytidylate kinase family. Type 1 subfamily.

The protein resides in the cytoplasm. It catalyses the reaction CMP + ATP = CDP + ADP. The catalysed reaction is dCMP + ATP = dCDP + ADP. The chain is Cytidylate kinase from Rhodopirellula baltica (strain DSM 10527 / NCIMB 13988 / SH1).